A 2440-amino-acid polypeptide reads, in one-letter code: Nuclear receptor corepressor 1 (2440 aa).

The span at 1–18 shows a compositional bias: polar residues; that stretch reads MSSSGYPPNQGAFSTEQS. 2 disordered regions span residues 1 to 177 and 206 to 231; these read MSSS…SKLS and QQQL…VEQK. The interaction with ZBTB33 and HEXIM1 stretch occupies residues 1-373; it reads MSSSGYPPNQ…QRGAGLSATI (373 aa). Residues 51–64 show a composition bias toward low complexity; it reads SQASQLLQQQQQQQ. 3 stretches are compositionally biased toward basic and acidic residues: residues 77–88, 99–119, and 141–155; these read PGSDRPQERRTS, VDHD…DSHF, and ADAK…KHEA. Ser172 carries the post-translational modification Phosphoserine. Positions 174–216 form a coiled coil; the sequence is SKLSKEELIQSMDRVDREIAKVEQQILKLKKKQQQLEEEAAKP. The span at 212-221 shows a compositional bias: basic and acidic residues; the sequence is EAAKPPEPEK. A Phosphoserine modification is found at Ser224. An interaction with SIN3A/B region spans residues 254–312; the sequence is FEGLGPKVELPLYNQPSDTKVYHENIKTNQVMRKKLILFFKRRNHARKQREQKICQRYD. A coiled-coil region spans residues 299-328; the sequence is ARKQREQKICQRYDQLMEAWEKKVDRIENN. The region spanning 435–486 is the SANT 1 domain; it reads QFMNVWTDHEKEIFKDKFIQHPKNFGLIASYLERKSVPDCVLYYYLTKKNEN. Disordered regions lie at residues 497–632 and 677–915; these read KRRG…TEEE and NLLQ…GSIL. Positions 501 to 557 form a coiled coil; sequence RNQQIARPSQEEKVEEKEEDKAEKTEKKEEEKKDEEEKDEKEDSKENTKEKDKIDGT. Basic and acidic residues-rich tracts occupy residues 509 to 531 and 541 to 556; these read SQEE…KEEE and KEDS…KIDG. Positions 592 to 605 are enriched in low complexity; sequence EAAAASAAAAAATE. A compositionally biased stretch (pro residues) spans 606–617; it reads EPPPPLPPPPEP. The 52-residue stretch at 623 to 674 folds into the SANT 2 domain; it reads VETSRWTEEEMEVAKKGLVEHGRNWAAIAKMVGTKSEAQCKNFYFNYKRRHN. Positions 698 to 708 are enriched in polar residues; it reads QCESVASTVSA. Residues 709–728 are compositionally biased toward acidic residues; it reads QEDEDIEASNEEENPEDSEV. The span at 752 to 768 shows a compositional bias: low complexity; the sequence is ELEPTTETAPSTSPSLA. Residues 781–792 are compositionally biased toward polar residues; it reads ETQVNDSISAET. The span at 820–859 shows a compositional bias: basic and acidic residues; sequence DSVDVEVRVPENHASKVEGDNTKERDLDRASEKVEPRDED. Composition is skewed to polar residues over residues 864 to 883 and 906 to 915; these read QQIN…SATC and SLLNPTGSIL. Positions 988–1816 are interaction with ETO; it reads RSSTSPCGTS…QGLPASRYNT (829 aa). Ser999 carries the phosphoserine modification. Residues 1022–1046 form a disordered region; sequence VRLPTTRPTRPPPPLIPSSKTTVAS. Lys1106 participates in a covalent cross-link: Glycyl lysine isopeptide (Lys-Gly) (interchain with G-Cter in SUMO1); alternate. Lys1106 is covalently cross-linked (Glycyl lysine isopeptide (Lys-Gly) (interchain with G-Cter in SUMO2); alternate). Ser1111 is modified (phosphoserine). Residue Lys1184 forms a Glycyl lysine isopeptide (Lys-Gly) (interchain with G-Cter in SUMO2) linkage. The segment at 1184–1204 is disordered; the sequence is KGSISRMPIEDSSPEKGREEA. 6 positions are modified to phosphoserine: Ser1195, Ser1196, Ser1249, Ser1263, Ser1281, and Ser1322. Lys1336 is modified (N6-acetyllysine). At Thr1367 the chain carries Phosphothreonine. Lys1389 is covalently cross-linked (Glycyl lysine isopeptide (Lys-Gly) (interchain with G-Cter in SUMO2)). Lys1412 is covalently cross-linked (Glycyl lysine isopeptide (Lys-Gly) (interchain with G-Cter in SUMO2); alternate). Lys1412 carries the N6-acetyllysine; alternate modification. Positions 1440–1459 are disordered; sequence AGETVRSRHTSVVSSGPSVL. Phosphoserine occurs at positions 1450 and 1472. The segment covering 1488–1512 has biased composition (polar residues); the sequence is YQNTMSRGSPMMNRTSDVTISSNKS. Residues 1488 to 1554 are disordered; sequence YQNTMSRGSP…SPFDPHHRGS (67 aa). The interval 1501 to 2440 is interaction with C1D; it reads RTSDVTISSN…QYETLSDSDD (940 aa). Residue Lys1518 forms a Glycyl lysine isopeptide (Lys-Gly) (interchain with G-Cter in SUMO2) linkage. At Ser1592 the chain carries Phosphoserine. Disordered regions lie at residues 1690–1759 and 1884–1922; these read PRPY…SPSP and SSAF…LRTR. 2 stretches are compositionally biased toward basic and acidic residues: residues 1712-1729 and 1903-1921; these read AERE…RERI and AGKD…ELRT. Residues 1933–1937 carry the CORNR box 1 motif; sequence IDVII. A disordered region spans residues 1943–1969; it reads SDKDARERGSQSSDSSSSLSSHRYETP. The span at 1952-1963 shows a compositional bias: low complexity; that stretch reads SQSSDSSSSLSS. 2 positions are modified to phosphoserine: Ser1977 and Ser1981. Residues 2006 to 2041 form a disordered region; that stretch reads PTRQYEGPLHHYRPQQESPSPQQQLPPSSQAEGMGQ. Positions 2020–2035 are enriched in low complexity; the sequence is QQESPSPQQQLPPSSQ. Residues 2032–2115 are ID1; the sequence is PSSQAEGMGQ…QAQSVHHQRP (84 aa). The segment at 2047 to 2050 is required for interaction with RARA in the absence of its ligand; that stretch reads RLIT. The CORNR box 2 motif lies at 2055 to 2059; that stretch reads ICQII. The span at 2067–2086 shows a compositional bias: low complexity; the sequence is QVSSQTPQQPPTSTFQNSPS. A disordered region spans residues 2067-2155; that stretch reads QVSSQTPQQP…PYEPISPPQV (89 aa). Residues 2087–2110 are compositionally biased toward polar residues; sequence ALVSTPVRTKTSNRYSPESQAQSV. Ser2102, Ser2120, Ser2136, Ser2151, and Ser2184 each carry phosphoserine. Basic and acidic residues predominate over residues 2124–2142; that stretch reads LVDKSRGSRPGKSPERSHV. The interval 2212–2273 is ID2; sequence IFRKLNSSGG…EDIIRKALMG (62 aa). A CORNR box 3 motif is present at residues 2263-2267; that stretch reads LEDII. The interval 2287–2440 is disordered; it reads SQPMGVVPGT…QYETLSDSDD (154 aa). Residues 2296–2305 show a composition bias toward polar residues; the sequence is TANTSVVTSG. Residue Thr2399 is modified to Phosphothreonine. Composition is skewed to polar residues over residues 2407-2418 and 2431-2440; these read AVNQAAPHQQNR and QYETLSDSDD. Ser2436 and Ser2438 each carry phosphoserine.

The protein belongs to the N-CoR nuclear receptor corepressors family. Forms a large corepressor complex that contains SIN3A/B and histone deacetylases HDAC1 and HDAC2. This complex associates with the thyroid receptor (TR) and the retinoid acid receptor (RAR) in the absence of ligand. Interacts directly with RARA; the interaction is facilitated with RARA trimethylation. Component of the N-Cor repressor complex, at least composed of CBFA2T3, HEXIM1, NCOR1, NCOR2, HDAC3, TBL1X, TBL1XR1, CORO2A and GPS2. Interacts with ZBTB33; the interaction serves to recruit the N-CoR complex to promoter regions containing methylated CpG dinucleotides. Interacts with TRIM28 and KDM3A. Interacts (via the RD1 domain) with BAZ1A (via its N-terminal); the interaction corepresses a number of NCOR1-regulated genes. Interacts with BCL6, C1D, DACH1, HEXIM1, HDAC7, RORA, RORC, SAP30, SIAH2, SIN3A and SIN3B. May interact with DEAF1. Interacts with RXRA. Interacts with SETD5. Interacts with VDR. Interacts with ZBTB7A. Interacts with AR. Interacts with HDAC3. In terms of processing, ubiquitinated; mediated by SIAH2 and leading to its subsequent proteasomal degradation.

It is found in the nucleus. In terms of biological role, mediates transcriptional repression by certain nuclear receptors. Part of a complex which promotes histone deacetylation and the formation of repressive chromatin structures which may impede the access of basal transcription factors. Participates in the transcriptional repressor activity produced by BCL6. Recruited by ZBTB7A to the androgen response elements/ARE on target genes, negatively regulates androgen receptor signaling and androgen-induced cell proliferation. Mediates the NR1D1-dependent repression and circadian regulation of TSHB expression. The NCOR1-HDAC3 complex regulates the circadian expression of the core clock gene ARTNL/BMAL1 and the genes involved in lipid metabolism in the liver. In Homo sapiens (Human), this protein is Nuclear receptor corepressor 1 (NCOR1).